We begin with the raw amino-acid sequence, 239 residues long: Ribonuclease 3 (239 aa).

One can recognise an RNase III domain in the interval 18–141; the sequence is YLTLEKALGY…LMAGVYLEAG (124 aa). E54 provides a ligand contact to Mg(2+). D58 is a catalytic residue. Mg(2+)-binding residues include S127 and E130. E130 is a catalytic residue. In terms of domain architecture, DRBM spans 168–237; sequence DYKTALQELT…AYQALQKLKE (70 aa).

Belongs to the ribonuclease III family. Homodimer. Requires Mg(2+) as cofactor.

The protein localises to the cytoplasm. The catalysed reaction is Endonucleolytic cleavage to 5'-phosphomonoester.. Digests double-stranded RNA. Involved in the processing of primary rRNA transcript to yield the immediate precursors to the large and small rRNAs (23S and 16S). Processes some mRNAs, and tRNAs when they are encoded in the rRNA operon. Processes pre-crRNA and tracrRNA of type II CRISPR loci if present in the organism. This Helicobacter pylori (strain P12) protein is Ribonuclease 3.